The chain runs to 498 residues: MASQGTKRSYEQMETDGERQNATEIRASVGKMIDGIGRFYIQMCTELKLSDYEGRLIQNSLTVERMVLSAFDERRNRYLEEHPSAGKDPKKTGGPIYKRVGGRWMRELVLYDKEEIRRIWRQANNGDDATRGLTHMMIWHSNLNDTTYQRTRALVRTGMDPRMCSLMQGSTLPRRSGAAGAAVKGIGTMVMELIRMIKRGINDRNFWRGENGRKTRIAYERMCNILKGKFQTAAQRAMMDQVRESRNPGNAEIEDLIFSARSALILRGSVAHKSCLPACVYGPAVSSGYDFEKEGYSLVGIDPFKLLQNSQVYSLIRPNENPAHKSQLVWMACHSAAFEDLRLLSFIRGTKVSPRGKLSTRGVQIASNENMDNMESSTLELRSRYWAIRTRSGGNTNQQRASAGQISVQPTFSVQRNLPFEKSTVMAAFTGNTEGRTSDMRAEIIRMMEGAKPEEVSFRGRGVFELSDEKATNPIVPSFDMSNEGSYFFGDNAEEYDN.

A Unconventional nuclear localization signal motif is present at residues 1–18; that stretch reads MASQGTKRSYEQMETDGE. The interval 1–21 is disordered; the sequence is MASQGTKRSYEQMETDGERQN. Residues 8–21 show a composition bias toward basic and acidic residues; that stretch reads RSYEQMETDGERQN. Residues 198-216 carry the Bipartite nuclear localization signal motif; it reads KRGINDRNFWRGENGRKTR.

It belongs to the influenza viruses nucleoprotein family. Homomultimerizes to form the nucleocapsid. May bind host exportin-1/XPO1. Binds to viral genomic RNA. Protein-RNA contacts are mediated by a combination of electrostatic interactions between positively charged residues and the phosphate backbone and planar interactions between aromatic side chains and bases. Post-translationally, late in virus-infected cells, may be cleaved from a 56-kDa protein to a 53-kDa protein by a cellular caspase. This cleavage might be a marker for the onset of apoptosis in infected cells or have a specific function in virus host interaction.

The protein localises to the virion. It is found in the host nucleus. In terms of biological role, encapsidates the negative strand viral RNA, protecting it from nucleases. The encapsidated genomic RNA is termed the ribonucleoprotein (RNP) and serves as template for transcription and replication. The RNP needs to be localized in the host nucleus to start an infectious cycle, but is too large to diffuse through the nuclear pore complex. NP comprises at least 2 nuclear localization signals that are responsible for the active RNP import into the nucleus through cellular importin alpha/beta pathway. Later in the infection, nclear export of RNPs are mediated through viral proteins NEP interacting with M1 which binds nucleoproteins. It is possible that nucleoprotein binds directly host exportin-1/XPO1 and plays an active role in RNPs nuclear export. M1 interaction with RNP seems to hide nucleoprotein's nuclear localization signals. Soon after a virion infects a new cell, M1 dissociates from the RNP under acidification of the virion driven by M2 protein. Dissociation of M1 from RNP unmasks nucleoprotein's nuclear localization signals, targeting the RNP to the nucleus. In Aves (whales), this protein is Nucleoprotein.